Consider the following 369-residue polypeptide: tRNA(Met) cytidine acetate ligase (369 aa).

ATP contacts are provided by residues 7–20 (VAEF…HKYL), G96, N152, and R175.

It belongs to the TmcAL family.

Its subcellular location is the cytoplasm. It carries out the reaction cytidine(34) in elongator tRNA(Met) + acetate + ATP = N(4)-acetylcytidine(34) in elongator tRNA(Met) + AMP + diphosphate. Catalyzes the formation of N(4)-acetylcytidine (ac(4)C) at the wobble position of elongator tRNA(Met), using acetate and ATP as substrates. First activates an acetate ion to form acetyladenylate (Ac-AMP) and then transfers the acetyl group to tRNA to form ac(4)C34. This chain is tRNA(Met) cytidine acetate ligase, found in Streptococcus agalactiae serotype III (strain NEM316).